A 361-amino-acid chain; its full sequence is NAD(P)H-quinone oxidoreductase subunit 1, chloroplastic (361 aa).

The next 7 membrane-spanning stretches (helical) occupy residues 28 to 48 (IWVL…VLVI), 99 to 119 (FTIG…VIPF), 128 to 148 (LSIG…GLLM), 249 to 269 (YSGI…LVSS), 270 to 290 (LFVT…LFVP), 301 to 321 (TIIC…ISIA), and 341 to 361 (FLLP…LLSL).

It belongs to the complex I subunit 1 family. In terms of assembly, NDH is composed of at least 16 different subunits, 5 of which are encoded in the nucleus.

Its subcellular location is the plastid. The protein localises to the chloroplast thylakoid membrane. It carries out the reaction a plastoquinone + NADH + (n+1) H(+)(in) = a plastoquinol + NAD(+) + n H(+)(out). The catalysed reaction is a plastoquinone + NADPH + (n+1) H(+)(in) = a plastoquinol + NADP(+) + n H(+)(out). Its function is as follows. NDH shuttles electrons from NAD(P)H:plastoquinone, via FMN and iron-sulfur (Fe-S) centers, to quinones in the photosynthetic chain and possibly in a chloroplast respiratory chain. The immediate electron acceptor for the enzyme in this species is believed to be plastoquinone. Couples the redox reaction to proton translocation, and thus conserves the redox energy in a proton gradient. This is NAD(P)H-quinone oxidoreductase subunit 1, chloroplastic from Jasminum nudiflorum (Winter jasmine).